Here is a 209-residue protein sequence, read N- to C-terminus: uncharacterized protein (209 aa).

This is an uncharacterized protein from Orgyia pseudotsugata (Douglas-fir tussock moth).